The sequence spans 406 residues: Altered inheritance of mitochondria protein 23, mitochondrial (406 aa).

The transit peptide at 1–18 (MSLRIILKRDFSQCIRVF) directs the protein to the mitochondrion. Disordered regions lie at residues 29-79 (TSNR…YQQR) and 335-406 (ISQS…KIED). Composition is skewed to low complexity over residues 38–54 (GNKN…NGNR), 69–79 (KTKYQQQYQQR), and 371–385 (QQQQ…SKTN).

The protein belongs to the AIM23 family.

The protein resides in the mitochondrion. The chain is Altered inheritance of mitochondria protein 23, mitochondrial (AIM23) from Candida dubliniensis (strain CD36 / ATCC MYA-646 / CBS 7987 / NCPF 3949 / NRRL Y-17841) (Yeast).